The following is a 150-amino-acid chain: Oleosin Ara h 10.0102 (150 aa).

Helical transmembrane passes span 39 to 59 (VIAV…AGLA) and 73 to 93 (LFIL…LSVA).

It belongs to the oleosin family. As to expression, expressed in seeds (at protein level).

The protein resides in the lipid droplet. The protein localises to the membrane. Its function is as follows. May have a structural role to stabilize the lipid body during desiccation of the seed by preventing coalescence of the oil. Probably interacts with both lipid and phospholipid moieties of lipid bodies. May also provide recognition signals for specific lipase anchorage in lipolysis during seedling growth. This Arachis hypogaea (Peanut) protein is Oleosin Ara h 10.0102.